The sequence spans 239 residues: Isoprenyl transferase (239 aa).

Asp16 is a catalytic residue. Asp16 provides a ligand contact to Mg(2+). Substrate contacts are provided by residues 17 to 20 (GNGR), Trp21, Arg29, His33, and 61 to 63 (STE). The Proton acceptor role is filled by Asn64. Residues Trp65, Arg67, Arg187, and 193–195 (RLS) each bind substrate. Glu206 contributes to the Mg(2+) binding site.

Belongs to the UPP synthase family. As to quaternary structure, homodimer. Mg(2+) is required as a cofactor.

In terms of biological role, catalyzes the condensation of isopentenyl diphosphate (IPP) with allylic pyrophosphates generating different type of terpenoids. The sequence is that of Isoprenyl transferase from Lactobacillus johnsonii (strain CNCM I-12250 / La1 / NCC 533).